Consider the following 185-residue polypeptide: Large ribosomal subunit protein uL5 (185 aa).

It belongs to the universal ribosomal protein uL5 family. Part of the 50S ribosomal subunit; part of the 5S rRNA/L5/L18/L25 subcomplex. Contacts the 5S rRNA and the P site tRNA. Forms a bridge to the 30S subunit in the 70S ribosome.

This is one of the proteins that bind and probably mediate the attachment of the 5S RNA into the large ribosomal subunit, where it forms part of the central protuberance. In the 70S ribosome it contacts protein S13 of the 30S subunit (bridge B1b), connecting the 2 subunits; this bridge is implicated in subunit movement. Contacts the P site tRNA; the 5S rRNA and some of its associated proteins might help stabilize positioning of ribosome-bound tRNAs. The polypeptide is Large ribosomal subunit protein uL5 (Nitrobacter winogradskyi (strain ATCC 25391 / DSM 10237 / CIP 104748 / NCIMB 11846 / Nb-255)).